The primary structure comprises 532 residues: Neutral amino acid transporter A (532 aa).

Position 1 is an N-acetylmethionine (Met-1). A disordered region spans residues 1 to 29 (MEKSGETNGYLDGTQAEPAAGPRTPETAM). The Cytoplasmic segment spans residues 1-41 (MEKSGETNGYLDGTQAEPAAGPRTPETAMGKSQRCASFFRR). 3 helical membrane passes run 42–62 (HALV…GAAL), 88–108 (MIIL…LDAS), and 119–139 (AYFG…AFII). Topologically, residues 140–216 (KPGAGAQTLQ…VTKEKIPVVT (77 aa)) are extracellular. N-linked (GlcNAc...) asparagine glycosylation is found at Asn-201 and Asn-206. Helical transmembrane passes span 217–237 (DVEG…GVAL), 257–277 (ATMV…MFLI), 298–318 (IFAS…LVYF), 328–348 (FLLG…SSAT), 373–393 (IGAT…AVFI), and 418–438 (VGAA…LEAI). The tract at residues 495–532 (EAIPNSKSEEETSPLVTHQNPAGPVAIAPELESKESVL) is disordered. Ser-507, Ser-527, and Ser-530 each carry phosphoserine.

The protein belongs to the dicarboxylate/amino acid:cation symporter (DAACS) (TC 2.A.23) family. SLC1A4 subfamily.

The protein localises to the membrane. It is found in the melanosome. It carries out the reaction L-threonine(in) + Na(+)(in) = L-threonine(out) + Na(+)(out). The enzyme catalyses L-serine(in) + Na(+)(in) = L-serine(out) + Na(+)(out). The catalysed reaction is L-cysteine(in) + Na(+)(in) = L-cysteine(out) + Na(+)(out). It catalyses the reaction L-alanine(in) + Na(+)(in) = L-alanine(out) + Na(+)(out). It carries out the reaction L-proline(in) + Na(+)(in) = L-proline(out) + Na(+)(out). The enzyme catalyses 4-hydroxy-L-proline(in) + Na(+)(in) = 4-hydroxy-L-proline(out) + Na(+)(out). In terms of biological role, sodium-dependent neutral amino-acid transporter that mediates transport of alanine, serine, cysteine, proline, hydroxyproline and threonine. This is Neutral amino acid transporter A (Slc1a4) from Mus musculus (Mouse).